Reading from the N-terminus, the 375-residue chain is Histidine biosynthesis bifunctional protein HisB (375 aa).

The interval 1 to 168 is histidinol-phosphatase; that stretch reads MTPIVFIDRD…GIAHTLADAP (168 aa). Asp8 functions as the Nucleophile in the catalytic mechanism. Residues Asp8, Asp10, and Asp128 each contribute to the Mg(2+) site. Residue Asp10 is the Proton donor of the active site. An imidazoleglycerol-phosphate dehydratase region spans residues 169 to 375; it reads RRAVVQRHTK…HVLPSTKGAL (207 aa).

It in the N-terminal section; belongs to the histidinol-phosphatase family. The protein in the C-terminal section; belongs to the imidazoleglycerol-phosphate dehydratase family. It depends on Mg(2+) as a cofactor.

It is found in the cytoplasm. It carries out the reaction D-erythro-1-(imidazol-4-yl)glycerol 3-phosphate = 3-(imidazol-4-yl)-2-oxopropyl phosphate + H2O. The enzyme catalyses L-histidinol phosphate + H2O = L-histidinol + phosphate. It functions in the pathway amino-acid biosynthesis; L-histidine biosynthesis; L-histidine from 5-phospho-alpha-D-ribose 1-diphosphate: step 6/9. The protein operates within amino-acid biosynthesis; L-histidine biosynthesis; L-histidine from 5-phospho-alpha-D-ribose 1-diphosphate: step 8/9. The protein is Histidine biosynthesis bifunctional protein HisB of Xylella fastidiosa (strain 9a5c).